The primary structure comprises 373 residues: Chaperone protein DnaJ (373 aa).

A J domain is found at 5–70; the sequence is CYYEVLEVSR…EKRSRYDRFG (66 aa). The CR-type zinc-finger motif lies at 134-212; it reads GTEVELNIPV…CRGAGYVRKQ (79 aa). Cys-147, Cys-150, Cys-164, Cys-167, Cys-186, Cys-189, Cys-200, and Cys-203 together coordinate Zn(2+). CXXCXGXG motif repeat units follow at residues 147–154, 164–171, 186–193, and 200–207; these read CDTCEGSG, CSHCGGRG, CPACNGRG, and CSECRGAG.

The protein belongs to the DnaJ family. Homodimer. Zn(2+) is required as a cofactor.

The protein localises to the cytoplasm. In terms of biological role, participates actively in the response to hyperosmotic and heat shock by preventing the aggregation of stress-denatured proteins and by disaggregating proteins, also in an autonomous, DnaK-independent fashion. Unfolded proteins bind initially to DnaJ; upon interaction with the DnaJ-bound protein, DnaK hydrolyzes its bound ATP, resulting in the formation of a stable complex. GrpE releases ADP from DnaK; ATP binding to DnaK triggers the release of the substrate protein, thus completing the reaction cycle. Several rounds of ATP-dependent interactions between DnaJ, DnaK and GrpE are required for fully efficient folding. Also involved, together with DnaK and GrpE, in the DNA replication of plasmids through activation of initiation proteins. This Maridesulfovibrio salexigens (strain ATCC 14822 / DSM 2638 / NCIMB 8403 / VKM B-1763) (Desulfovibrio salexigens) protein is Chaperone protein DnaJ.